Consider the following 881-residue polypeptide: Mechanosensitive ion channel protein 5 (881 aa).

Composition is skewed to basic and acidic residues over residues 1 to 12 and 48 to 59; these read MAAVDSTDRRDF and DGEKGKNDKKGD. Residues 1 to 248 are disordered; it reads MAAVDSTDRR…RNGFEEEEEE (248 aa). Polar residues predominate over residues 115–145; it reads ELQSNTPPRPATASNTPRRGLTTISESSSPV. Positions 169–179 are enriched in basic and acidic residues; it reads EEGRNRDEAEV. Ser231 carries the phosphoserine modification. A run of 6 helical transmembrane segments spans residues 265–285, 309–329, 349–369, 387–407, 642–662, and 677–697; these read LSFW…SLVC, VLVL…IVFL, KSVQ…FLFD, VLVC…LVKV, IINV…LGIA, and VAFV…FLFV. Residues 861-881 are disordered; sequence PTANPTSSDRIPPSWMQQRGP. A compositionally biased stretch (polar residues) spans 864 to 881; sequence NPTSSDRIPPSWMQQRGP.

It belongs to the MscS (TC 1.A.23) family.

It localises to the membrane. Mechanosensitive channel that opens in response to stretch forces in the membrane lipid bilayer. This chain is Mechanosensitive ion channel protein 5 (MSL5), found in Arabidopsis thaliana (Mouse-ear cress).